A 187-amino-acid chain; its full sequence is Large ribosomal subunit protein uL5 (187 aa).

The protein belongs to the universal ribosomal protein uL5 family. Part of the 50S ribosomal subunit; part of the 5S rRNA/L5/L18/L25 subcomplex. Contacts the 5S rRNA and the P site tRNA. Forms a bridge to the 30S subunit in the 70S ribosome.

Its function is as follows. This is one of the proteins that bind and probably mediate the attachment of the 5S RNA into the large ribosomal subunit, where it forms part of the central protuberance. In the 70S ribosome it contacts protein S13 of the 30S subunit (bridge B1b), connecting the 2 subunits; this bridge is implicated in subunit movement. Contacts the P site tRNA; the 5S rRNA and some of its associated proteins might help stabilize positioning of ribosome-bound tRNAs. The sequence is that of Large ribosomal subunit protein uL5 from Corynebacterium diphtheriae (strain ATCC 700971 / NCTC 13129 / Biotype gravis).